We begin with the raw amino-acid sequence, 303 residues long: Oxygen-dependent coproporphyrinogen-III oxidase (303 aa).

Residue Ser93 coordinates substrate. A divalent metal cation contacts are provided by His97 and His107. The Proton donor role is filled by His107. 109–111 (NVR) contacts substrate. Positions 146 and 176 each coordinate a divalent metal cation. The tract at residues 241–276 (YVEFNLVYDRGTLFGLQSGGRTESILMSLPPQVRWG) is important for dimerization. 259-261 (GGR) contributes to the substrate binding site.

Belongs to the aerobic coproporphyrinogen-III oxidase family. Homodimer. A divalent metal cation is required as a cofactor.

It localises to the cytoplasm. The enzyme catalyses coproporphyrinogen III + O2 + 2 H(+) = protoporphyrinogen IX + 2 CO2 + 2 H2O. Its pathway is porphyrin-containing compound metabolism; protoporphyrin-IX biosynthesis; protoporphyrinogen-IX from coproporphyrinogen-III (O2 route): step 1/1. In terms of biological role, involved in the heme biosynthesis. Catalyzes the aerobic oxidative decarboxylation of propionate groups of rings A and B of coproporphyrinogen-III to yield the vinyl groups in protoporphyrinogen-IX. This Pseudomonas putida (strain W619) protein is Oxygen-dependent coproporphyrinogen-III oxidase.